The following is a 409-amino-acid chain: Multidrug efflux pump Tap (409 aa).

12 helical membrane passes run 10 to 30 (LLILFAALTAGAGNGITIVAF), 46 to 66 (IVAMAGTLPLLVATLIAGAAV), 80 to 98 (LLSALSVAAVPVLALIFGV), 104 to 123 (AVLAVLAGLGAFFDPAGMTA), 144 to 168 (SVYEAVFNLGYIVGPGIGGLMIATL), 174 to 193 (MWVTAGAFCCSILAISVLRL), 218 to 240 (FVWYTPVLRTLAIVDLVATGLYM), 260 to 282 (LGWVLMALSIGGLLGALGYAVMS), 289 to 308 (ATMLTAVITLGVAMTVIAFL), 313 to 335 (LILVLCAIVGFVYGPIAPIYNYV), 348 to 370 (VVGVMGSLAYAAGPLGLILAGPL), and 375 to 397 (GLHATFLALSLPMLLLGVVAVFL).

Belongs to the major facilitator superfamily. Drug:H(+) antiporter-3 (DHA3) (TC 2.A.1.21) family.

The protein localises to the cell inner membrane. Its activity is regulated as follows. Efflux activity is inhibited by carbonyl cyanide m-chlorophenylhydrazone (CCCP) and reserpine, but not by o-vanadate or chlorpromazine (CPZ). Functionally, efflux pump that contributes to intrinsic antibiotic resistance. The pump uses the electrochemical gradient as a source of energy. Confers low-level resistance to tetracycline and to several aminoglycosides, including streptomycin, gentamicin, 2'-N-ethylnetilmicin and 6'-N-ethylnetilmicin. The polypeptide is Multidrug efflux pump Tap (Mycolicibacterium fortuitum (Mycobacterium fortuitum)).